The primary structure comprises 521 residues: U4/U6 small nuclear ribonucleoprotein Prp4 (521 aa).

Position 26 is an N6-acetyllysine (Lys26). WD repeat units follow at residues 228–267 (GDDRPISYCHFSPNSKMLATACWSGLCKLWSVPDCNLLHT), 270–317 (GHNT…PVAD), 320–359 (GHTVRVARVMWHPSGRFLGTTCYDRSWRLWDLEAQEEILH), 362–401 (GHSMGVYDIAFHQDGSLAGTGGLDAFGRVWDLRTGRCIMF), 404–443 (GHLKEIYGINFSPNGYHIATGSGDNTCKVWDLRQRRCVYT), 446–486 (AHQN…PLKT), and 489–521 (GHEGKVMGLDISSDGQLIATCSYDRTFKLWMAE).

Component of the precatalytic spliceosome (spliceosome B complex). Component of the U4/U6-U5 tri-snRNP complex, a building block of the precatalytic spliceosome (spliceosome B complex). The U4/U6-U5 tri-snRNP complex is composed of the U4, U6 and U5 snRNAs and at least PRPF3, PRPF4, PRPF6, PRPF8, PRPF31, SNRNP200, TXNL4A, SNRNP40, SNRPB, SNRPD1, SNRPD2, SNRPD3, SNRPE, SNRPF, SNRPG, DDX23, CD2BP2, PPIH, SNU13, EFTUD2, SART1 and USP39, plus LSM2, LSM3, LSM4, LSM5, LSM6, LSM7 and LSM8. Interacts directly with PRPF18, PPIH and PRPF3. Part of a heteromeric complex containing PPIH, PRPF3 and PRPF4 that is stable in the absence of RNA. Interacts with ERCC6.

The protein localises to the nucleus. The protein resides in the nucleus speckle. Functionally, plays a role in pre-mRNA splicing as component of the U4/U6-U5 tri-snRNP complex that is involved in spliceosome assembly, and as component of the precatalytic spliceosome (spliceosome B complex). The sequence is that of U4/U6 small nuclear ribonucleoprotein Prp4 (PRPF4) from Pongo abelii (Sumatran orangutan).